Consider the following 137-residue polypeptide: Putative pre-16S rRNA nuclease (137 aa).

This sequence belongs to the YqgF nuclease family.

The protein resides in the cytoplasm. Could be a nuclease involved in processing of the 5'-end of pre-16S rRNA. This chain is Putative pre-16S rRNA nuclease, found in Mycoplasmopsis synoviae (strain 53) (Mycoplasma synoviae).